The following is a 520-amino-acid chain: Biotinidase (520 aa).

An N-terminal signal peptide occupies residues 1–21 (MSGARTAPALFFLGCSALALG). One can recognise a CN hydrolase domain in the interval 49-333 (NPLELVSRQE…TGNTTSEMDP (285 aa)). The Proton acceptor role is filled by Glu-89. 3 N-linked (GlcNAc...) asparagine glycosylation sites follow: Asn-96, Asn-127, and Asn-180. Catalysis depends on Lys-189, which acts as the Proton donor. Cys-222 serves as the catalytic Nucleophile. N-linked (GlcNAc...) asparagine glycosylation is found at Asn-326, Asn-379, and Asn-466.

This sequence belongs to the carbon-nitrogen hydrolase superfamily. BTD/VNN family.

It localises to the secreted. Its subcellular location is the extracellular space. It carries out the reaction biocytin + H2O = biotin + L-lysine. It catalyses the reaction biotin amide + H2O = biotin + NH4(+). Its function is as follows. Catalytic release of biotin from biocytin, the product of biotin-dependent carboxylases degradation. In Mus musculus (Mouse), this protein is Biotinidase (Btd).